A 794-amino-acid chain; its full sequence is Sucrose synthase (794 aa).

The GT-B glycosyltransferase stretch occupies residues 263–742 (MISRLLILSP…ALDRVASRYT (480 aa)).

Belongs to the glycosyltransferase 1 family. Homotetramer.

The enzyme catalyses an NDP-alpha-D-glucose + D-fructose = a ribonucleoside 5'-diphosphate + sucrose + H(+). The catalysed reaction is ADP-alpha-D-glucose + D-fructose = sucrose + ADP + H(+). Its activity is regulated as follows. Inhibited by GDP over 10 mM and by over 2 mM MgCl(2). Catalyzes the reversible conversion of sucrose and a nucleotide disphosphate (NDP) into fructose and NDP-glucose; although the reaction is freely reversible in vitro, the physiological reaction seems to be sucrose cleavage. Unlike characterized plant enzymes prefers ADP as a cosubstrate, whereas plants prefer UDP. The KM for sucrose is 8-fold lower in the presence of ADP than UDP. Its preference for ADP over UDP suggests it may directly link sucrose and glycogen metabolism. This chain is Sucrose synthase (ss2), found in Nitrosomonas europaea (strain ATCC 19718 / CIP 103999 / KCTC 2705 / NBRC 14298).